The following is a 500-amino-acid chain: Probable cation transporter HKT1;4 (500 aa).

The Cytoplasmic segment spans residues 1-12; the sequence is MPTSRRALAGGA. The next 2 helical transmembrane spans lie at 13 to 33 and 74 to 94; these read LSMHVAYFLAISCLGYGLLGV and LVVLTVLMLLGGEVFVSLVGL. Topologically, residues 95 to 156 are cytoplasmic; sequence ASKWSKLRSD…ADTLRHNAVR (62 aa). Residues 121–145 form a disordered region; that stretch reads ADIDGGDVENPTSSGEEAASRRRPM. 2 helical membrane-spanning segments follow: residues 157–177 and 239–259; these read ALFYIVLAIFAVVHVVGAVAV and VLAGNTLFAPLLAACVWAAAA. Residues 260 to 290 are Cytoplasmic-facing; the sequence is ATRREELVEMAREGGRAAAAGYAHLMPARRC. Transmembrane regions (helical) follow at residues 291–311 and 346–366; these read WMLAATVAAFVAVLMALVCGM and LSILAPAILVLFVLMMYLPPY. The Cytoplasmic segment spans residues 367–390; that stretch reads TTWFPFEENSTTKDSNAENQGIRL. The next 2 membrane-spanning stretches (helical) occupy residues 391 to 411 and 464 to 484; these read LESTLLSQLSYLTIFVIAICI and GFVGRWSDSGKLILIFVMFFG. At 485-500 the chain is on the cytoplasmic side; the sequence is RLKKFSMKGGKAWKLS.

This sequence belongs to the TrkH potassium transport family. HKT (TC 2.A.38.3) subfamily.

Its subcellular location is the membrane. In terms of biological role, probable cation transporter. May be involved in regulation of potassium-sodium homeostasis. The chain is Probable cation transporter HKT1;4 from Oryza sativa subsp. japonica (Rice).